The primary structure comprises 429 residues: Serine hydroxymethyltransferase (429 aa).

Residues Leu-126 and 130 to 132 contribute to the (6S)-5,6,7,8-tetrahydrofolate site; that span reads GHL. Lys-235 carries the N6-(pyridoxal phosphate)lysine modification. 359 to 361 provides a ligand contact to (6S)-5,6,7,8-tetrahydrofolate; that stretch reads SPF.

Belongs to the SHMT family. In terms of assembly, homodimer. It depends on pyridoxal 5'-phosphate as a cofactor.

It localises to the cytoplasm. It catalyses the reaction (6R)-5,10-methylene-5,6,7,8-tetrahydrofolate + glycine + H2O = (6S)-5,6,7,8-tetrahydrofolate + L-serine. The protein operates within one-carbon metabolism; tetrahydrofolate interconversion. It participates in amino-acid biosynthesis; glycine biosynthesis; glycine from L-serine: step 1/1. Functionally, catalyzes the reversible interconversion of serine and glycine with tetrahydrofolate (THF) serving as the one-carbon carrier. This reaction serves as the major source of one-carbon groups required for the biosynthesis of purines, thymidylate, methionine, and other important biomolecules. Also exhibits THF-independent aldolase activity toward beta-hydroxyamino acids, producing glycine and aldehydes, via a retro-aldol mechanism. In Synechococcus sp. (strain CC9902), this protein is Serine hydroxymethyltransferase.